Consider the following 391-residue polypeptide: Aminoacetone oxidase (391 aa).

Residues alanine 14, glutamate 33, isoleucine 134, glutamate 362, asparagine 374, and isoleucine 375 each coordinate FAD.

This sequence belongs to the BaiN/RdsA family. Monomer. It depends on FAD as a cofactor.

Its function is as follows. Flavoprotein that probably catalyzes the condensation of two molecules of aminoacetone to yield 3,6-dimethyl-2,5-dihydropyrazine, which is subsequently oxidized to 2,5-dimethylpyrazine. It could be involved in a microbial defense mechanism related to aminoacetone catabolism through a pathway yielding dimethylpyrazine derivatives instead of methylglyoxal. It has also low aminoacetone oxidase activity, and can produce hydrogen peroxide from aminoacetone. In addition, it shows very low L-amino acid oxidase activity, and can produce hydrogen peroxide from peptone and from seven amino acids, L-aspartate, L-tryptophan, L-lysine, L-isoleucine, L-arginine, L-asparagine and L-glutamine. It cannot use L-malate, oxaloacetate or alpha-aminobutyrate. Plays a role in antioxidant defense. In Streptococcus cristatus, this protein is Aminoacetone oxidase.